The sequence spans 424 residues: Proline--tRNA ligase (424 aa).

Belongs to the class-II aminoacyl-tRNA synthetase family. ProS type 2 subfamily. Homodimer.

It is found in the cytoplasm. It catalyses the reaction tRNA(Pro) + L-proline + ATP = L-prolyl-tRNA(Pro) + AMP + diphosphate. In terms of biological role, catalyzes the attachment of proline to tRNA(Pro) in a two-step reaction: proline is first activated by ATP to form Pro-AMP and then transferred to the acceptor end of tRNA(Pro). This chain is Proline--tRNA ligase, found in Ehrlichia chaffeensis (strain ATCC CRL-10679 / Arkansas).